A 257-amino-acid polypeptide reads, in one-letter code: 5'-nucleotidase SurE (257 aa).

A divalent metal cation-binding residues include aspartate 8, aspartate 9, serine 40, and asparagine 95.

It belongs to the SurE nucleotidase family. The cofactor is a divalent metal cation.

Its subcellular location is the cytoplasm. The catalysed reaction is a ribonucleoside 5'-phosphate + H2O = a ribonucleoside + phosphate. Functionally, nucleotidase that shows phosphatase activity on nucleoside 5'-monophosphates. The sequence is that of 5'-nucleotidase SurE from Desulfovibrio desulfuricans (strain ATCC 27774 / DSM 6949 / MB).